We begin with the raw amino-acid sequence, 336 residues long: Protein RecA (336 aa).

66 to 73 (GNESSGKT) is an ATP binding site.

The protein belongs to the RecA family.

It is found in the cytoplasm. In terms of biological role, can catalyze the hydrolysis of ATP in the presence of single-stranded DNA, the ATP-dependent uptake of single-stranded DNA by duplex DNA, and the ATP-dependent hybridization of homologous single-stranded DNAs. It interacts with LexA causing its activation and leading to its autocatalytic cleavage. This Mycoplasma pneumoniae (strain ATCC 29342 / M129 / Subtype 1) (Mycoplasmoides pneumoniae) protein is Protein RecA.